A 457-amino-acid chain; its full sequence is tRNA (guanine(37)-N(1))-methyltransferase (457 aa).

Residues His225, Asp263–Leu264, Asp291–Gly292, and Asn358 each bind S-adenosyl-L-methionine.

It belongs to the class I-like SAM-binding methyltransferase superfamily. TRM5/TYW2 family. Monomer.

The protein localises to the mitochondrion matrix. It is found in the nucleus. Its subcellular location is the cytoplasm. It carries out the reaction guanosine(37) in tRNA + S-adenosyl-L-methionine = N(1)-methylguanosine(37) in tRNA + S-adenosyl-L-homocysteine + H(+). Specifically methylates the N1 position of guanosine-37 in various cytoplasmic and mitochondrial tRNAs. Methylation is not dependent on the nature of the nucleoside 5' of the target nucleoside. This is the first step in the biosynthesis of wybutosine (yW), a modified base adjacent to the anticodon of tRNAs and required for accurate decoding. The chain is tRNA (guanine(37)-N(1))-methyltransferase from Coprinopsis cinerea (strain Okayama-7 / 130 / ATCC MYA-4618 / FGSC 9003) (Inky cap fungus).